A 488-amino-acid polypeptide reads, in one-letter code: Fumarate hydratase (488 aa).

Residues Ser105, Ser147, Asn148, Thr194, and His195 each coordinate (S)-malate. The Proton donor/acceptor role is filled by His195. The active site involves Ser340. Positions 341, 346, and 348 each coordinate (S)-malate.

The protein belongs to the class-II fumarase/aspartase family. Fumarase subfamily. Homotetramer.

The protein localises to the cytoplasm. Its subcellular location is the cytosol. It carries out the reaction (S)-malate = fumarate + H2O. In terms of biological role, catalyzes the reversible stereospecific interconversion of fumarate to L-malate. Fumarate metabolism in the cytosol plays a role during urea cycle and arginine metabolism; fumarate being a by-product of the urea cycle and amino-acid catabolism. The protein is Fumarate hydratase of Schistosoma mansoni (Blood fluke).